We begin with the raw amino-acid sequence, 255 residues long: MERWLQLHVWSKDQQDQDQEHLLDEKIPINRAWMDFLQMSPFLKRKLVTLLETVAKLRTSTVVYPGEERVFSWSWLCEPTQVKVIILGQDPYHGGQATGLAFSVSKTDPVPPSLRNIFLEVSACDSQFAVPLHGCLNNWARQGVLLLNTILTVEKGKPGSHSDLGWIWFTNYIISCLSNQLDHCVFMLWGSKAIEKASLINTNKHLVLKSQHPSPLAARSNRPSLWPKFLGCGHFKQANEYLELHGKCPVDWNLD.

D90 (proton acceptor) is an active-site residue.

Belongs to the uracil-DNA glycosylase (UDG) superfamily. UNG family.

It localises to the host nucleus. The catalysed reaction is Hydrolyzes single-stranded DNA or mismatched double-stranded DNA and polynucleotides, releasing free uracil.. In terms of biological role, excises uracil residues from the DNA which can arise as a result of misincorporation of dUMP residues by DNA polymerase or deamination of cytosines. Therefore may reduce deleterious uracil incorporation into the viral genome, particularly in terminally differentiated cells which lack DNA repair enzymes. The protein is Uracil-DNA glycosylase of Equine herpesvirus 2 (strain 86/87) (EHV-2).